The primary structure comprises 232 residues: Ribose-5-phosphate isomerase A (232 aa).

Residues 28-31 (TGST), 83-86 (DGAD), and 96-99 (KGGG) each bind substrate. The active-site Proton acceptor is Glu105. Lys123 contacts substrate.

It belongs to the ribose 5-phosphate isomerase family. Homodimer.

The enzyme catalyses aldehydo-D-ribose 5-phosphate = D-ribulose 5-phosphate. The protein operates within carbohydrate degradation; pentose phosphate pathway; D-ribose 5-phosphate from D-ribulose 5-phosphate (non-oxidative stage): step 1/1. In terms of biological role, catalyzes the reversible conversion of ribose-5-phosphate to ribulose 5-phosphate. The polypeptide is Ribose-5-phosphate isomerase A (Allorhizobium ampelinum (strain ATCC BAA-846 / DSM 112012 / S4) (Agrobacterium vitis (strain S4))).